Here is a 421-residue protein sequence, read N- to C-terminus: EQQRYLNAKKYVKLVLVADYIMYLKYGRSLTTLRTRMYDIVNIINLIFQRMNIHVALVGLEIWSNRDKIIVQSSADVTLDLFAKWRETDLLKRKSHDNAQLLTGINFNGPTAGLAYLSGICKPMYSAGIVQDHNKVHHLVAIAMAHEMGHNLGMDHDKDTCTCGARSCVMAGTLSCEPSYLFSDCSRREHRAFLIKDMPQCILEKPLRTDVVSPPVCGNYFVEVGEECDCGFSATCRDTCCDAATCKLRQGAQCAEGLCCDQCRFKGAGTECRAAKDECDMADLCTGRSAECTDRFQRNGQPCQNNNGYCYNGTCPIMRDQCIALFGPNAAVSQDACFQFNLQGNHYGYCRKEQNTKIACEPQDVKCGRLYCFPSSPATKNPCNIHYSPNDEDKGMVLPGTKCADGKACSNGRCVDVNTPY.

Residues 10–206 (KYVKLVLVAD…DMPQCILEKP (197 aa)) enclose the Peptidase M12B domain. Intrachain disulfides connect C121/C201, C161/C185, and C163/C168. Residue H146 participates in Zn(2+) binding. Residue E147 is part of the active site. Residues H150 and H156 each coordinate Zn(2+). Positions 214–299 (PPVCGNYFVE…AECTDRFQRN (86 aa)) constitute a Disintegrin domain. V216, N219, F221, E223, E226, and D229 together coordinate Ca(2+). Intrachain disulfides connect C217-C246, C228-C241, C230-C236, C240-C263, C254-C260, C259-C285, C272-C292, C279-C310, C303-C315, C322-C372, C337-C383, C350-C360, C367-C409, and C403-C414. The D/ECD-tripeptide motif lies at 278-280 (ECD). Ca(2+) is bound by residues D280, M281, D283, D294, and R295. N312 is a glycosylation site (N-linked (GlcNAc...) asparagine).

The protein belongs to the venom metalloproteinase (M12B) family. P-III subfamily. P-IIIc sub-subfamily. In terms of assembly, homodimer; disulfide-linked. Zn(2+) is required as a cofactor. Expressed by the venom gland.

Its subcellular location is the secreted. Snake venom zinc metalloprotease that induces apoptosis in vascular endothelial cells (VEC), without degrading the extracellular matrix (it cannot cleave collagen) or inhibiting adhesion of VEC. Has also fibrinogenolytic and hemorrhagic activities. This Lachesis muta rhombeata (Bushmaster) protein is Zinc metalloproteinase-disintegrin-like lachestatin-1.